Reading from the N-terminus, the 1083-residue chain is Regulator of the glycerol channel 1 (1083 aa).

Disordered stretches follow at residues 1–46 and 69–89; these read MSDY…GSSD and LKNE…KENK. A compositionally biased stretch (polar residues) spans 13-31; it reads GGISKQPATPGSTRSSSRN. Serine 136, serine 249, serine 252, serine 481, and serine 537 each carry phosphoserine. In terms of domain architecture, PH spans 495–606; that stretch reads CIRVGYLLKK…DCSLKDSTDS (112 aa). The segment at 534-582 is disordered; that stretch reads DSKSPRSKNKPVVEQSDISRVNKDGTNAGSHPSSKGTQDPKLTKRRKGL. Polar residues predominate over residues 549–570; that stretch reads SDISRVNKDGTNAGSHPSSKGT. 3 positions are modified to phosphoserine: serine 652, serine 765, and serine 813. Residues threonine 817 and threonine 857 each carry the phosphothreonine modification. Phosphoserine occurs at positions 866, 879, 918, 966, 969, and 975. The tract at residues 979-1083 is disordered; it reads EENRTQNCSG…TVPATSASSK (105 aa). 3 stretches are compositionally biased toward polar residues: residues 983 to 992, 1043 to 1061, and 1071 to 1083; these read TQNCSGSRKS, LKKT…VSND, and STNT…ASSK. Residues serine 1059, serine 1081, and serine 1082 each carry the phosphoserine modification.

The protein belongs to the RGC1 family.

It is found in the cytoplasm. Its function is as follows. Positive regulator of FPS1 glycerol channel required for the glycerol efflux. This is Regulator of the glycerol channel 1 (RGC1) from Saccharomyces cerevisiae (strain ATCC 204508 / S288c) (Baker's yeast).